Here is a 146-residue protein sequence, read N- to C-terminus: Hemoglobin subunit beta (146 aa).

The 145-residue stretch at 2 to 146 (HWSAEEKQLI…VAHALARKYH (145 aa)) folds into the Globin domain. 2 residues coordinate heme b: histidine 63 and histidine 92.

This sequence belongs to the globin family. Heterotetramer of two alpha chains and two beta chains. Red blood cells.

Functionally, involved in oxygen transport from the lung to the various peripheral tissues. This Streptopelia orientalis (Eastern turtle dove) protein is Hemoglobin subunit beta (HBB).